The primary structure comprises 265 residues: Dehydrogenase RED2 (265 aa).

A helical membrane pass occupies residues 6 to 26 (SFLLSKLFLCIALCTAYVAFS). An N-linked (GlcNAc...) asparagine glycan is attached at N45. The helical transmembrane segment at 47 to 67 (TSTVFGLTIVAIGLSALSSWL) threads the bilayer. The N-linked (GlcNAc...) asparagine glycan is linked to N74. V89 is a binding site for NADP(+). N-linked (GlcNAc...) asparagine glycosylation occurs at N127. NADP(+) is bound by residues D136 and N163. N176 carries an N-linked (GlcNAc...) asparagine glycan. Residue S216 is the Proton donor of the active site. Positions 228 and 232 each coordinate NADP(+). The active-site Proton acceptor is the Y228. The active-site Lowers pKa of active site Tyr is the K232.

Belongs to the short-chain dehydrogenases/reductases (SDR) family.

It is found in the membrane. The enzyme catalyses a primary alcohol + NAD(+) = an aldehyde + NADH + H(+). It catalyses the reaction a secondary alcohol + NAD(+) = a ketone + NADH + H(+). Its pathway is mycotoxin biosynthesis. Functionally, dehydrogenase; part of the Tox1B locus, one of the 2 loci that mediate the biosynthesis of T-toxin, a family of linear polyketides 37 to 45 carbons in length, of which the major component is 41 carbons, and which leads to high virulence to maize. One of the PKSs (PKS1 or PKS2) could synthesize a precursor, used subsequently by the other PKS as starter unit, to add additional carbons. Variability in the length of the final carbon backbone C35-47 could be achieved by varying the number of condensation cycles, or use of different starter or extender units or might be due to decarboxylation of the penultimate product, catalyzed by DEC1. Additional proteins are required for the biosynthesis of T-toxin, including oxidoreductases RED1, RED2, RED3, LAM1 and OXI1, as well as esterase TOX9. The protein is Dehydrogenase RED2 of Cochliobolus heterostrophus (strain C4 / ATCC 48331 / race T) (Southern corn leaf blight fungus).